The sequence spans 876 residues: Ergothioneine biosynthesis protein 1 (876 aa).

Residues 36-350 (IIDIRRVAVE…TYGNEYGLHL (315 aa)) form an L-histidine N(alpha)-methyltransferase region. Y88 contacts L-histidine. 3 residues coordinate S-adenosyl-L-methionine: G119, K125, and D146. Residues N202, Y242, and 315-317 (EQS) each bind L-histidine. A hercynylcysteine S-oxide synthase region spans residues 378-874 (ALWATWDVVT…YAWVGARVVR (497 aa)). Positions 413, 506, and 510 each coordinate Fe cation. Disordered regions lie at residues 631–650 (GTTNSVSGHHSNRTSKQQLP) and 732–761 (TNNGVEITPPSSPSSETPAESSSPSDSNTT). The segment covering 744–758 (PSSETPAESSSPSDS) has biased composition (low complexity).

This sequence in the N-terminal section; belongs to the methyltransferase superfamily. EgtD family. It in the C-terminal section; belongs to the EgtB family. The cofactor is Fe(2+).

It is found in the cytoplasm. The protein localises to the nucleus. The enzyme catalyses L-histidine + 3 S-adenosyl-L-methionine = hercynine + 3 S-adenosyl-L-homocysteine + 3 H(+). The catalysed reaction is hercynine + L-cysteine + O2 = S-(hercyn-2-yl)-L-cysteine S-oxide + H2O. Its pathway is amino-acid biosynthesis; ergothioneine biosynthesis. In terms of biological role, catalyzes the SAM-dependent triple methylation of the alpha-amino group of histidine to form hercynine and subsequent conjugation with cysteine and oxygen to form hercynylcysteine sulfoxide, the first two steps in the biosynthesis pathway of ergothioneine. Ergothioneine is an unusual thio-histidine betaine amino acid that acts as an antioxidant against peroxide in conidia and contributes to conidial longevity. In Neurospora crassa (strain ATCC 24698 / 74-OR23-1A / CBS 708.71 / DSM 1257 / FGSC 987), this protein is Ergothioneine biosynthesis protein 1.